We begin with the raw amino-acid sequence, 471 residues long: Casein kinase 1-like protein 9 (471 aa).

In terms of domain architecture, Protein kinase spans 9 to 278; the sequence is FKLGRKIGSG…LKRLFRDLFI (270 aa). ATP-binding positions include 15 to 23 and Lys-38; that span reads IGSGSFGEL. Asp-128 serves as the catalytic Proton acceptor. A disordered region spans residues 300-471; the sequence is SSSGSSSRTR…RSLELLTLRK (172 aa). The span at 325 to 339 shows a compositional bias: basic and acidic residues; it reads EKQERIAGKETRENR. The span at 385–430 shows a compositional bias: low complexity; it reads SSRYGSSSRRAIPSSSRPSSAGGPSDSRSSSRLVTSTGGVGTVSNR. Residues 431–449 show a composition bias toward polar residues; that stretch reads ASTSQRIQAGNESRTSSFS. The span at 454-464 shows a compositional bias: basic and acidic residues; the sequence is NTREDPLRRSL.

The protein belongs to the protein kinase superfamily. CK1 Ser/Thr protein kinase family. Casein kinase I subfamily. Monomer. Post-translationally, autophosphorylated on serine, threonine and tyrosine residues. As to expression, expressed in leaves, stems and flowers.

The protein resides in the cytoplasm. The protein localises to the nucleus. It carries out the reaction L-seryl-[protein] + ATP = O-phospho-L-seryl-[protein] + ADP + H(+). The catalysed reaction is L-threonyl-[protein] + ATP = O-phospho-L-threonyl-[protein] + ADP + H(+). Functionally, casein kinases are operationally defined by their preferential utilization of acidic proteins such as caseins as substrates. Can phosphorylate casein on serine and threonine residues, and poly(Glu,Tyr) in vitro. The polypeptide is Casein kinase 1-like protein 9 (Arabidopsis thaliana (Mouse-ear cress)).